The sequence spans 497 residues: Probable malate:quinone oxidoreductase (497 aa).

This sequence belongs to the MQO family. FAD serves as cofactor.

The enzyme catalyses (S)-malate + a quinone = a quinol + oxaloacetate. Its pathway is carbohydrate metabolism; tricarboxylic acid cycle; oxaloacetate from (S)-malate (quinone route): step 1/1. This chain is Probable malate:quinone oxidoreductase, found in Prochlorococcus marinus subsp. pastoris (strain CCMP1986 / NIES-2087 / MED4).